Consider the following 311-residue polypeptide: Aspartate carbamoyltransferase catalytic subunit (311 aa).

2 residues coordinate carbamoyl phosphate: Arg-55 and Thr-56. Position 83 (Lys-83) interacts with L-aspartate. Carbamoyl phosphate-binding residues include Arg-105, His-133, and Gln-136. Residues Arg-166 and Arg-220 each coordinate L-aspartate. Carbamoyl phosphate contacts are provided by Gly-261 and Pro-262.

Belongs to the aspartate/ornithine carbamoyltransferase superfamily. ATCase family. As to quaternary structure, heterododecamer (2C3:3R2) of six catalytic PyrB chains organized as two trimers (C3), and six regulatory PyrI chains organized as three dimers (R2).

It carries out the reaction carbamoyl phosphate + L-aspartate = N-carbamoyl-L-aspartate + phosphate + H(+). It participates in pyrimidine metabolism; UMP biosynthesis via de novo pathway; (S)-dihydroorotate from bicarbonate: step 2/3. Catalyzes the condensation of carbamoyl phosphate and aspartate to form carbamoyl aspartate and inorganic phosphate, the committed step in the de novo pyrimidine nucleotide biosynthesis pathway. The chain is Aspartate carbamoyltransferase catalytic subunit from Chlorobium chlorochromatii (strain CaD3).